A 217-amino-acid chain; its full sequence is 3,4-dihydroxy-2-butanone 4-phosphate synthase (217 aa).

Residues 37–38 (RE), Asp42, 150–154 (RRGHT), and Glu174 each bind D-ribulose 5-phosphate. A Mg(2+)-binding site is contributed by Glu38. His153 provides a ligand contact to Mg(2+).

Belongs to the DHBP synthase family. Homodimer. Mg(2+) is required as a cofactor. It depends on Mn(2+) as a cofactor.

It carries out the reaction D-ribulose 5-phosphate = (2S)-2-hydroxy-3-oxobutyl phosphate + formate + H(+). It functions in the pathway cofactor biosynthesis; riboflavin biosynthesis; 2-hydroxy-3-oxobutyl phosphate from D-ribulose 5-phosphate: step 1/1. Its function is as follows. Catalyzes the conversion of D-ribulose 5-phosphate to formate and 3,4-dihydroxy-2-butanone 4-phosphate. The sequence is that of 3,4-dihydroxy-2-butanone 4-phosphate synthase from Aeromonas salmonicida (strain A449).